The chain runs to 374 residues: Methylthioribose-1-phosphate isomerase (374 aa).

The active-site Proton donor is Asp256.

Belongs to the eIF-2B alpha/beta/delta subunits family. MtnA subfamily.

The protein localises to the cytoplasm. Its subcellular location is the nucleus. The enzyme catalyses 5-(methylsulfanyl)-alpha-D-ribose 1-phosphate = 5-(methylsulfanyl)-D-ribulose 1-phosphate. The protein operates within amino-acid biosynthesis; L-methionine biosynthesis via salvage pathway; L-methionine from S-methyl-5-thio-alpha-D-ribose 1-phosphate: step 1/6. Its function is as follows. Catalyzes the interconversion of methylthioribose-1-phosphate (MTR-1-P) into methylthioribulose-1-phosphate (MTRu-1-P). The chain is Methylthioribose-1-phosphate isomerase from Leishmania braziliensis.